The chain runs to 393 residues: S-adenosylmethionine synthase 3 (393 aa).

E9 provides a ligand contact to Mg(2+). H15 contacts ATP. A K(+)-binding site is contributed by E43. The L-methionine site is built by E56 and Q99. ATP contacts are provided by residues N167–K169, S235–F238, D246, R252–K253, A269, K273, and K277. D246 contributes to the L-methionine binding site. L-methionine is bound at residue K277.

The protein belongs to the AdoMet synthase family. In terms of assembly, homotetramer. It depends on Mn(2+) as a cofactor. The cofactor is Mg(2+). Co(2+) serves as cofactor. Requires K(+) as cofactor. Mostly expressed in flowers, seedpods and roots, and, to a lower extent, in stems and leaves.

The protein resides in the cytoplasm. It catalyses the reaction L-methionine + ATP + H2O = S-adenosyl-L-methionine + phosphate + diphosphate. It functions in the pathway amino-acid biosynthesis; S-adenosyl-L-methionine biosynthesis; S-adenosyl-L-methionine from L-methionine: step 1/1. Functionally, catalyzes the formation of S-adenosylmethionine from methionine and ATP. The reaction comprises two steps that are both catalyzed by the same enzyme: formation of S-adenosylmethionine (AdoMet) and triphosphate, and subsequent hydrolysis of the triphosphate. The sequence is that of S-adenosylmethionine synthase 3 (MSAMS3) from Brassica juncea (Indian mustard).